A 66-amino-acid polypeptide reads, in one-letter code: Large ribosomal subunit protein bL33c (66 aa).

This sequence belongs to the bacterial ribosomal protein bL33 family.

It is found in the plastid. It localises to the chloroplast. The polypeptide is Large ribosomal subunit protein bL33c (Morus indica (Mulberry)).